A 63-amino-acid polypeptide reads, in one-letter code: Large ribosomal subunit protein uL29 (63 aa).

This sequence belongs to the universal ribosomal protein uL29 family.

This is Large ribosomal subunit protein uL29 from Alteromonas mediterranea (strain DSM 17117 / CIP 110805 / LMG 28347 / Deep ecotype).